We begin with the raw amino-acid sequence, 98 residues long: Homeobox protein Ht-En (98 aa).

Positions E3–S62 form a DNA-binding region, homeobox. The segment at N79–A98 is disordered. A compositionally biased stretch (low complexity) spans S81–A98.

This sequence belongs to the engrailed homeobox family. Phosphorylated in the Ser-rich domain.

The protein resides in the nucleus. In terms of biological role, this protein specifies the body segmentation pattern. The sequence is that of Homeobox protein Ht-En (HT-EN) from Helobdella triserialis (Leech).